A 336-amino-acid polypeptide reads, in one-letter code: Biotin synthase (336 aa).

Positions 55–288 constitute a Radical SAM core domain; sequence GEAASLHACS…RTIIKFAAGR (234 aa). Residues C73, C77, and C80 each contribute to the [4Fe-4S] cluster site. 3 residues coordinate [2Fe-2S] cluster: C152, C213, and K283.

This sequence belongs to the radical SAM superfamily. Biotin synthase family. As to quaternary structure, homodimer. [4Fe-4S] cluster serves as cofactor. The cofactor is [2Fe-2S] cluster.

It carries out the reaction (4R,5S)-dethiobiotin + (sulfur carrier)-SH + 2 reduced [2Fe-2S]-[ferredoxin] + 2 S-adenosyl-L-methionine = (sulfur carrier)-H + biotin + 2 5'-deoxyadenosine + 2 L-methionine + 2 oxidized [2Fe-2S]-[ferredoxin]. It participates in cofactor biosynthesis; biotin biosynthesis; biotin from 7,8-diaminononanoate: step 2/2. In terms of biological role, catalyzes the conversion of dethiobiotin (DTB) to biotin by the insertion of a sulfur atom into dethiobiotin via a radical-based mechanism. The protein is Biotin synthase of Chlorobium limicola (strain DSM 245 / NBRC 103803 / 6330).